A 302-amino-acid chain; its full sequence is Aquaporin NIP3-1 (302 aa).

The interval 1 to 31 is disordered; sequence MEPGSTPPNGSAPATPGTPAPLFSSGGPRVD. Low complexity predominate over residues 7 to 21; it reads PPNGSAPATPGTPAP. 2 consecutive transmembrane segments (helical) span residues 76-96 and 102-122; these read LGAEFVGTFILIFFATAAPIV and GAISPFGNAACAGLAVATVIL. An NPA 1 motif is present at residues 133–135; it reads NPS. 3 helical membrane passes run 149–169, 193–213, and 217–237; these read LQVPAYVAVQALASVCAAFAL, AFFTEFIISFNLLFVVTAVAT, and AVGELAGIAVGAAVTLNILVA. Residues 246 to 248 carry the NPA 2 motif; it reads NPV. The chain crosses the membrane as a helical span at residues 264-284; sequence WIYLLAPTLGALAGASVYKAV.

Belongs to the MIP/aquaporin (TC 1.A.8) family. NIP (TC 1.A.8.12) subfamily.

Its subcellular location is the membrane. Its function is as follows. Aquaporins facilitate the transport of water and small neutral solutes across cell membranes. In Zea mays (Maize), this protein is Aquaporin NIP3-1 (NIP3-1).